A 358-amino-acid polypeptide reads, in one-letter code: Small ribosomal subunit biogenesis GTPase RsgA (358 aa).

Positions 76–234 constitute a CP-type G domain; that stretch reads STEIDRPAVA…LADSPGFNQP (159 aa). GTP is bound by residues 125-128 and 176-184; these read NKID and GPSGVGKSS. Positions 259, 264, 266, and 272 each coordinate Zn(2+). A disordered region spans residues 319-358; the sequence is TYEPKLANKKYRRPSRRGKNQDQERYENKTLQDIYNDDSE. The segment covering 325–336 has biased composition (basic residues); that stretch reads ANKKYRRPSRRG. The span at 337 to 348 shows a compositional bias: basic and acidic residues; that stretch reads KNQDQERYENKT.

It belongs to the TRAFAC class YlqF/YawG GTPase family. RsgA subfamily. Monomer. Associates with 30S ribosomal subunit, binds 16S rRNA. Zn(2+) serves as cofactor.

Its subcellular location is the cytoplasm. One of several proteins that assist in the late maturation steps of the functional core of the 30S ribosomal subunit. Helps release RbfA from mature subunits. May play a role in the assembly of ribosomal proteins into the subunit. Circularly permuted GTPase that catalyzes slow GTP hydrolysis, GTPase activity is stimulated by the 30S ribosomal subunit. This Microcystis aeruginosa (strain NIES-843 / IAM M-2473) protein is Small ribosomal subunit biogenesis GTPase RsgA.